The primary structure comprises 245 residues: 1-(5-phosphoribosyl)-5-[(5-phosphoribosylamino)methylideneamino] imidazole-4-carboxamide isomerase (245 aa).

The active-site Proton acceptor is aspartate 11. Catalysis depends on aspartate 132, which acts as the Proton donor.

This sequence belongs to the HisA/HisF family.

It localises to the cytoplasm. The catalysed reaction is 1-(5-phospho-beta-D-ribosyl)-5-[(5-phospho-beta-D-ribosylamino)methylideneamino]imidazole-4-carboxamide = 5-[(5-phospho-1-deoxy-D-ribulos-1-ylimino)methylamino]-1-(5-phospho-beta-D-ribosyl)imidazole-4-carboxamide. It functions in the pathway amino-acid biosynthesis; L-histidine biosynthesis; L-histidine from 5-phospho-alpha-D-ribose 1-diphosphate: step 4/9. This is 1-(5-phosphoribosyl)-5-[(5-phosphoribosylamino)methylideneamino] imidazole-4-carboxamide isomerase from Geobacillus thermodenitrificans (strain NG80-2).